The primary structure comprises 690 residues: Methionine--tRNA ligase (690 aa).

Positions 13–23 (PYANGQIHIGH) match the 'HIGH' region motif. Residues cysteine 144, cysteine 147, cysteine 157, and cysteine 160 each contribute to the Zn(2+) site. The 'KMSKS' region signature appears at 335-339 (KMSKS). Lysine 338 provides a ligand contact to ATP. A tRNA-binding domain is found at 584 to 690 (DFAKIDLRVA…SGAVPGMRIR (107 aa)).

This sequence belongs to the class-I aminoacyl-tRNA synthetase family. MetG type 1 subfamily. As to quaternary structure, homodimer. Requires Zn(2+) as cofactor.

It localises to the cytoplasm. The catalysed reaction is tRNA(Met) + L-methionine + ATP = L-methionyl-tRNA(Met) + AMP + diphosphate. Is required not only for elongation of protein synthesis but also for the initiation of all mRNA translation through initiator tRNA(fMet) aminoacylation. The polypeptide is Methionine--tRNA ligase (Cupriavidus metallidurans (strain ATCC 43123 / DSM 2839 / NBRC 102507 / CH34) (Ralstonia metallidurans)).